Consider the following 158-residue polypeptide: Pleckstrin homology domain-containing family J member 1 (158 aa).

A PH domain is found at P15–Y108.

This is Pleckstrin homology domain-containing family J member 1 (plekhj1) from Danio rerio (Zebrafish).